We begin with the raw amino-acid sequence, 433 residues long: Chaperone SurA (433 aa).

Residues 1–20 form the signal peptide; it reads MKNWRTLIFGLMFSVSTAFA. PpiC domains lie at 171–272 and 282–382; these read DTEL…KVND and VTEV…QLLD.

The protein resides in the periplasm. The catalysed reaction is [protein]-peptidylproline (omega=180) = [protein]-peptidylproline (omega=0). Functionally, chaperone involved in the correct folding and assembly of outer membrane proteins. Recognizes specific patterns of aromatic residues and the orientation of their side chains, which are found more frequently in integral outer membrane proteins. May act in both early periplasmic and late outer membrane-associated steps of protein maturation. The chain is Chaperone SurA from Photorhabdus laumondii subsp. laumondii (strain DSM 15139 / CIP 105565 / TT01) (Photorhabdus luminescens subsp. laumondii).